We begin with the raw amino-acid sequence, 198 residues long: Probable molybdenum cofactor guanylyltransferase (198 aa).

GTP is bound by residues 9-11, K22, D66, and D95; that span reads LAG. D95 contributes to the Mg(2+) binding site.

This sequence belongs to the MobA family. Mg(2+) serves as cofactor.

It is found in the cytoplasm. It carries out the reaction Mo-molybdopterin + GTP + H(+) = Mo-molybdopterin guanine dinucleotide + diphosphate. Transfers a GMP moiety from GTP to Mo-molybdopterin (Mo-MPT) cofactor (Moco or molybdenum cofactor) to form Mo-molybdopterin guanine dinucleotide (Mo-MGD) cofactor. The polypeptide is Probable molybdenum cofactor guanylyltransferase (Clostridium perfringens (strain SM101 / Type A)).